A 290-amino-acid polypeptide reads, in one-letter code: ATP synthase gamma chain (290 aa).

This sequence belongs to the ATPase gamma chain family. In terms of assembly, F-type ATPases have 2 components, CF(1) - the catalytic core - and CF(0) - the membrane proton channel. CF(1) has five subunits: alpha(3), beta(3), gamma(1), delta(1), epsilon(1). CF(0) has three main subunits: a, b and c.

It localises to the cell inner membrane. Functionally, produces ATP from ADP in the presence of a proton gradient across the membrane. The gamma chain is believed to be important in regulating ATPase activity and the flow of protons through the CF(0) complex. The sequence is that of ATP synthase gamma chain from Bacteroides fragilis (strain YCH46).